Here is a 198-residue protein sequence, read N- to C-terminus: MEHYLSLFVKSIFIENMALSFFLGMCTFLAVSKKVSTAFGLGIAVIVVLGIAVPANQIVYENILKDGALVEGVDLTFLNFITFIGVIAALVQILEMILDKFFPALYSALGIFLPLITVNCAIFGAVSFMVQREYNFAESVVYGIGAGTGWMLAIVALAGITEKMKYSDVPAGLKGLGITFISAGLMALGFMSFSGIKL.

The next 6 helical transmembrane spans lie at 11–31 (SIFI…FLAV), 35–55 (VSTA…AVPA), 77–97 (FLNF…LEMI), 110–130 (GIFL…SFMV), 140–160 (VVYG…LAGI), and 176–196 (LGIT…FSGI).

The protein belongs to the NqrDE/RnfAE family. In terms of assembly, composed of six subunits; NqrA, NqrB, NqrC, NqrD, NqrE and NqrF.

Its subcellular location is the cell inner membrane. It catalyses the reaction a ubiquinone + n Na(+)(in) + NADH + H(+) = a ubiquinol + n Na(+)(out) + NAD(+). Functionally, NQR complex catalyzes the reduction of ubiquinone-1 to ubiquinol by two successive reactions, coupled with the transport of Na(+) ions from the cytoplasm to the periplasm. NqrA to NqrE are probably involved in the second step, the conversion of ubisemiquinone to ubiquinol. This is Na(+)-translocating NADH-quinone reductase subunit E from Glaesserella parasuis serovar 5 (strain SH0165) (Haemophilus parasuis).